A 296-amino-acid chain; its full sequence is Class E basic helix-loop-helix protein 22 (296 aa).

A disordered region spans residues 26–70 (SAFRPPQGLDLSQPGDRSPLHCYDGPDPSDLLRHHQHHHQASSGA). The bHLH domain maps to 153–207 (TLRLNINARERRRMHDLNDALDELRAVIPYAHSPSVRKLSKIATLLLAKNYILMQ).

It localises to the nucleus. In terms of biological role, may act as a transcriptional repressor. The polypeptide is Class E basic helix-loop-helix protein 22 (bhlhe22) (Xenopus tropicalis (Western clawed frog)).